The following is a 37-amino-acid chain: Neuropeptide Y2-like conopeptide (37 aa).

Position 37 is a tyrosine amide (Tyr-37).

Belongs to the NPY family. As to expression, expressed by the venom duct.

It is found in the secreted. Causes hyperactivity such as jumping, rapid circling and tail flicking, after intraventicular injection into mouse brain. The protein is Neuropeptide Y2-like conopeptide of Conus betulinus (Beech cone).